The primary structure comprises 495 residues: Probable histidine ammonia-lyase (495 aa).

The segment at residues 141–143 is a cross-link (5-imidazolinone (Ala-Gly)); that stretch reads ASG. S142 is subject to 2,3-didehydroalanine (Ser).

The protein belongs to the PAL/histidase family. Contains an active site 4-methylidene-imidazol-5-one (MIO), which is formed autocatalytically by cyclization and dehydration of residues Ala-Ser-Gly.

Its subcellular location is the cytoplasm. It carries out the reaction L-histidine = trans-urocanate + NH4(+). It functions in the pathway amino-acid degradation; L-histidine degradation into L-glutamate; N-formimidoyl-L-glutamate from L-histidine: step 1/3. The sequence is that of Probable histidine ammonia-lyase from Thermoplasma volcanium (strain ATCC 51530 / DSM 4299 / JCM 9571 / NBRC 15438 / GSS1).